The sequence spans 911 residues: General transcription factor 3C polypeptide 2 (911 aa).

2 disordered regions span residues 34-187 (LDVK…RRRA) and 205-297 (ALPA…MAPN). Polar residues predominate over residues 35-46 (DVKTSSEMTSAE). S63 is modified (phosphoserine). A compositionally biased stretch (basic and acidic residues) spans 64–81 (PDQRRLPPEQESLSRLEQ). Residues 92–112 (SKPRASKPGRKRGGRTRKGPK) show a composition bias toward basic residues. A compositionally biased stretch (pro residues) spans 114–123 (PQQPNPPSAP). A phosphoserine mark is found at S132, S165, S167, S220, and S260. Acidic residues predominate over residues 253–262 (EAEDVEESEG). A compositionally biased stretch (low complexity) spans 263–275 (PSESSSEPEPAVP). WD repeat units lie at residues 465–521 (CDNG…ALLA) and 552–593 (SECG…PLQR). Residue S597 is modified to Phosphoserine. The WD 3 repeat unit spans residues 611–651 (AHDQAVRTLQWCKANSHFLASAGSDRKIKFWDLRRPYEPIN). Residues 765–785 (SPEGPDHSSASSGVPNPPKAR) form a disordered region. One copy of the WD 4 repeat lies at 832–874 (LQLEAIHKVRFSPNLDSYGWLVSGGQSGLVRIHFVRGLASPLG). Residues S871, S892, and S893 each carry the phosphoserine modification. A disordered region spans residues 889–911 (FQPSSPTRRPGFSPTSHRLLPTP). Phosphothreonine is present on T895. At S901 the chain carries Phosphoserine.

In terms of assembly, part of the TFIIIC subcomplex TFIIIC2, consisting of six subunits, GTF3C1, GTF3C2, GTF3C3, GTF3C4, GTF3C5 and GTF3C6.

The protein localises to the nucleus. Required for RNA polymerase III-mediated transcription. Component of TFIIIC that initiates transcription complex assembly on tRNA and is required for transcription of 5S rRNA and other stable nuclear and cytoplasmic RNAs. May play a direct role in stabilizing interactions of TFIIIC2 with TFIIIC1. This Pongo abelii (Sumatran orangutan) protein is General transcription factor 3C polypeptide 2 (GTF3C2).